The sequence spans 408 residues: DNA primase DnaG (408 aa).

The region spanning 172-248 is the Toprim domain; the sequence is DSIIIVEGRA…HVDYIARAPP (77 aa). Residues glutamate 178, aspartate 222, and aspartate 224 each coordinate Mg(2+). A disordered region spans residues 279–304; it reads AAGEKAETPQQPPPQQPVPQQEVREE.

Belongs to the archaeal DnaG primase family. As to quaternary structure, forms a ternary complex with MCM helicase and DNA. Component of the archaeal exosome complex. Mg(2+) serves as cofactor.

It carries out the reaction ssDNA + n NTP = ssDNA/pppN(pN)n-1 hybrid + (n-1) diphosphate.. In terms of biological role, RNA polymerase that catalyzes the synthesis of short RNA molecules used as primers for DNA polymerase during DNA replication. Also part of the exosome, which is a complex involved in RNA degradation. Acts as a poly(A)-binding protein that enhances the interaction between heteromeric, adenine-rich transcripts and the exosome. The sequence is that of DNA primase DnaG from Pyrobaculum aerophilum (strain ATCC 51768 / DSM 7523 / JCM 9630 / CIP 104966 / NBRC 100827 / IM2).